Reading from the N-terminus, the 436-residue chain is Trigger factor (436 aa).

The PPIase FKBP-type domain occupies 163–248 (GDTVNIDFDG…VNEIKYKDVP (86 aa)).

The protein belongs to the FKBP-type PPIase family. Tig subfamily.

It localises to the cytoplasm. The enzyme catalyses [protein]-peptidylproline (omega=180) = [protein]-peptidylproline (omega=0). In terms of biological role, involved in protein export. Acts as a chaperone by maintaining the newly synthesized protein in an open conformation. Functions as a peptidyl-prolyl cis-trans isomerase. This is Trigger factor from Staphylococcus saprophyticus subsp. saprophyticus (strain ATCC 15305 / DSM 20229 / NCIMB 8711 / NCTC 7292 / S-41).